A 339-amino-acid chain; its full sequence is Dihydroorotase (339 aa).

Zn(2+) contacts are provided by H12 and H14. Residues 14-16 (HVR) and N40 contribute to the substrate site. Zn(2+) is bound by residues K94, H133, H167, and D239. The residue at position 94 (K94) is an N6-carboxylysine. A substrate-binding site is contributed by H133. The active site involves D239. Substrate is bound by residues H243 and A255.

It belongs to the metallo-dependent hydrolases superfamily. DHOase family. Class II DHOase subfamily. As to quaternary structure, homodimer. Zn(2+) serves as cofactor.

It carries out the reaction (S)-dihydroorotate + H2O = N-carbamoyl-L-aspartate + H(+). The protein operates within pyrimidine metabolism; UMP biosynthesis via de novo pathway; (S)-dihydroorotate from bicarbonate: step 3/3. Its function is as follows. Catalyzes the reversible cyclization of carbamoyl aspartate to dihydroorotate. In Helicobacter pylori (strain ATCC 700392 / 26695) (Campylobacter pylori), this protein is Dihydroorotase.